The primary structure comprises 127 residues: Aspartate 1-decarboxylase (127 aa).

The active-site Schiff-base intermediate with substrate; via pyruvic acid is S25. S25 carries the pyruvic acid (Ser) modification. Residue T57 coordinates substrate. Y58 functions as the Proton donor in the catalytic mechanism. Residue 73–75 (GAA) participates in substrate binding.

This sequence belongs to the PanD family. In terms of assembly, heterooctamer of four alpha and four beta subunits. Requires pyruvate as cofactor. In terms of processing, is synthesized initially as an inactive proenzyme, which is activated by self-cleavage at a specific serine bond to produce a beta-subunit with a hydroxyl group at its C-terminus and an alpha-subunit with a pyruvoyl group at its N-terminus.

The protein localises to the cytoplasm. It catalyses the reaction L-aspartate + H(+) = beta-alanine + CO2. The protein operates within cofactor biosynthesis; (R)-pantothenate biosynthesis; beta-alanine from L-aspartate: step 1/1. Functionally, catalyzes the pyruvoyl-dependent decarboxylation of aspartate to produce beta-alanine. This Listeria monocytogenes serovar 1/2a (strain ATCC BAA-679 / EGD-e) protein is Aspartate 1-decarboxylase.